A 1325-amino-acid polypeptide reads, in one-letter code: Protein suppressor of sable (1325 aa).

2 disordered regions span residues 1–36 (MSVA…SKIQ) and 74–326 (VCLQ…GGSN). Acidic residues predominate over residues 9 to 30 (PLIDLEEDLEDGEIDDDEEDEQ). Over residues 119-131 (RSSNQDTSDQSLE) the composition is skewed to polar residues. The highly charged stretch occupies residues 138–327 (ATANPLLQST…GQEKMGGSNR (190 aa)). A compositionally biased stretch (basic residues) spans 149-158 (SSRRRKRKKE). The stretch at 149-179 (SSRRRKRKKEREREQKKDKEQQNRSRRDEND) forms a coiled coil. Residues 159 to 178 (REREQKKDKEQQNRSRRDEN) show a composition bias toward basic and acidic residues. Positions 236–246 (AGLGAGGGGGY) are enriched in gly residues. A coiled-coil region spans residues 276 to 296 (NEKEHQRGVNNRKRRDRDRLE). 2 C3H1-type zinc fingers span residues 330–357 (PRKL…HKEF) and 358–381 (PCKY…HGEP). Positions 444 to 478 (KRQDHQMQQQQQQLQHQQLQQQQEQQQTQQQAAAD) form a coiled coil. Residues 499–509 (KRKSRWTEKMG) are compositionally biased toward basic and acidic residues. 8 disordered regions span residues 499 to 535 (KRKS…LPPH), 588 to 622 (KAED…KSNG), 639 to 695 (FSGN…PSVF), 710 to 745 (SARQ…IGGG), 780 to 835 (AHSG…ALPP), 979 to 1058 (DLET…GGSK), 1143 to 1170 (EPNG…GGGV), and 1295 to 1325 (RGGH…NRNI). S524 is subject to Phosphoserine. The segment covering 594–606 (PQTQAELESSTPP) has biased composition (polar residues). Phosphothreonine is present on T604. Over residues 644–668 (PLDDDRDDDEQLIIDDGNDSTAEED) the composition is skewed to acidic residues. Position 663 is a phosphoserine (S663). Phosphothreonine is present on T664. Positions 710–726 (SARQLLPASATSPNQEN) are enriched in polar residues. Positions 790 to 800 (SNENSNSNSHS) are enriched in low complexity. Pro residues predominate over residues 1003 to 1015 (SVPPPSMRVPPPN). Positions 1021 to 1033 (PTVRTDPRRDPRR) are enriched in basic and acidic residues. Residues 1042–1056 (GASTANTTAPNASGG) are compositionally biased toward low complexity. 2 stretches are compositionally biased toward gly residues: residues 1149 to 1170 (AALG…GGGV) and 1295 to 1309 (RGGH…GNGN).

It belongs to the suppressor of sable family. Interacts with Wdr82.

It localises to the nucleus. The protein resides in the chromosome. Its function is as follows. RNA-binding protein that suppresses transcription of some RNAs. Together with Wdr82, part of a transcription termination checkpoint that promotes transcription termination of RNAs and their subsequent degradation by the nuclear exosome. Promotes transcription termination of aberrant RNAs, transcripts from genes containing a transposon inserted at their very 5' end or RNAs from heat-shock-inducible repetitive element. Binds RNA preferentially at a sequence that resembles a cryptic 5'-splice site. This chain is Protein suppressor of sable, found in Drosophila melanogaster (Fruit fly).